A 256-amino-acid chain; its full sequence is Small ribosomal subunit protein uS2 (256 aa).

Belongs to the universal ribosomal protein uS2 family.

The sequence is that of Small ribosomal subunit protein uS2 from Geotalea uraniireducens (strain Rf4) (Geobacter uraniireducens).